The sequence spans 193 residues: ATP-dependent Clp protease proteolytic subunit (193 aa).

The Nucleophile role is filled by serine 98. Residue histidine 123 is part of the active site.

This sequence belongs to the peptidase S14 family. In terms of assembly, fourteen ClpP subunits assemble into 2 heptameric rings which stack back to back to give a disk-like structure with a central cavity, resembling the structure of eukaryotic proteasomes.

It localises to the cytoplasm. The catalysed reaction is Hydrolysis of proteins to small peptides in the presence of ATP and magnesium. alpha-casein is the usual test substrate. In the absence of ATP, only oligopeptides shorter than five residues are hydrolyzed (such as succinyl-Leu-Tyr-|-NHMec, and Leu-Tyr-Leu-|-Tyr-Trp, in which cleavage of the -Tyr-|-Leu- and -Tyr-|-Trp bonds also occurs).. In terms of biological role, cleaves peptides in various proteins in a process that requires ATP hydrolysis. Has a chymotrypsin-like activity. Plays a major role in the degradation of misfolded proteins. In Haemophilus influenzae (strain PittEE), this protein is ATP-dependent Clp protease proteolytic subunit.